Consider the following 410-residue polypeptide: Regulator of microtubule dynamics protein 2 (410 aa).

Residues 9–28 form a helical membrane-spanning segment; sequence LILGIMAGTAGISLLAFWYH. Residue serine 51 is modified to Phosphoserine. Residues 69-110 adopt a coiled-coil conformation; sequence QRRQLQILEKLNELLTNMEELKEEIRFLKETIPKLEECIQDE. The interval 120 to 151 is disordered; that stretch reads ISPQHRARKKKGTTVQRSATSNSSEEAESEGG. Serine 121 carries the post-translational modification Phosphoserine. Residues 121-131 are compositionally biased toward basic residues; it reads SPQHRARKKKG. Threonine 139 is subject to Phosphothreonine. At tyrosine 152 the chain carries Phosphotyrosine. 2 positions are modified to phosphothreonine: threonine 154 and threonine 157.

This sequence belongs to the RMDN family. As to quaternary structure, interacts with microtubules.

Its subcellular location is the membrane. The protein resides in the cytoplasm. The protein localises to the cytoskeleton. It localises to the spindle. It is found in the spindle pole. The polypeptide is Regulator of microtubule dynamics protein 2 (Rmdn2) (Mus musculus (Mouse)).